The following is a 454-amino-acid chain: (Z)-3-hexen-1-ol acetyltransferase (454 aa).

Active-site proton acceptor residues include His-174 and Asp-389.

The protein belongs to the plant acyltransferase family. Expressed in leaves and stems. Lower levels in flowers and barely detected in roots and siliques.

The catalysed reaction is (3Z)-hex-3-en-1-ol + acetyl-CoA = (3Z)-hex-3-en-1-yl acetate + CoA. With respect to regulation, inhibited by magnesium, calcium, cobalt, zinc and copper. In terms of biological role, acyltransferase involved in the production of green leaf volatiles (GLVs). Uses acetyl-CoA as substrate, but not malonyl-CoA or benzoyl-CoA. Prefers primary, medium-chain-length, aliphatic alcohols. The chain is (Z)-3-hexen-1-ol acetyltransferase (CHAT) from Arabidopsis thaliana (Mouse-ear cress).